Reading from the N-terminus, the 198-residue chain is Thymidine kinase (198 aa).

Residues 9 to 16 (STMNAGKS) and 87 to 90 (DEAQ) each bind ATP. E88 acts as the Proton acceptor in catalysis. Zn(2+) contacts are provided by C145, C147, C182, and H185.

The protein belongs to the thymidine kinase family. Homotetramer.

Its subcellular location is the cytoplasm. It carries out the reaction thymidine + ATP = dTMP + ADP + H(+). This Ruegeria pomeroyi (strain ATCC 700808 / DSM 15171 / DSS-3) (Silicibacter pomeroyi) protein is Thymidine kinase.